A 103-amino-acid chain; its full sequence is Large ribosomal subunit protein uL24 (103 aa).

Belongs to the universal ribosomal protein uL24 family. In terms of assembly, part of the 50S ribosomal subunit.

Functionally, one of two assembly initiator proteins, it binds directly to the 5'-end of the 23S rRNA, where it nucleates assembly of the 50S subunit. Its function is as follows. One of the proteins that surrounds the polypeptide exit tunnel on the outside of the subunit. The chain is Large ribosomal subunit protein uL24 from Pediococcus pentosaceus (strain ATCC 25745 / CCUG 21536 / LMG 10740 / 183-1w).